A 302-amino-acid chain; its full sequence is MIFMGSTETVLSVLVLVLLGYILKVLGVLGEEDASTLNRVVINVAIPSLIFTSLYRADLSGISDLVLIPVICMITGTLSGTIAYLWARRRGLDSGKTWGLTVAAAMMNSGFLGYPVTAGIFGSEGLVRAIFYDTGTTLMFTSLGLLLSHISGGEGSRIMKRAVFFPPLWAFLLGVIFNLWGLPTGIAGTILGYLSGAAVPLIMISLGLTLNFRFLRHSVADATLVSGLRLLISPLMAAGISYVLAFRGLNFSVTVLEASMPSAMLAAVLAIENDLDVDLVSSCIFMSTILSLVSLPLWSVVL.

The next 9 helical transmembrane spans lie at 10–30 (VLSV…GVLG), 65–85 (LVLI…IAYL), 102–122 (VAAA…GIFG), 130–150 (IFYD…LSHI), 162–182 (AVFF…LWGL), 190–210 (ILGY…GLTL), 224–244 (LVSG…SYVL), 251–271 (FSVT…VLAI), and 282–302 (SCIF…SVVL).

This sequence belongs to the auxin efflux carrier (TC 2.A.69) family.

It is found in the cell membrane. This is an uncharacterized protein from Methanothermobacter thermautotrophicus (strain ATCC 29096 / DSM 1053 / JCM 10044 / NBRC 100330 / Delta H) (Methanobacterium thermoautotrophicum).